The primary structure comprises 81 residues: Photosystem I iron-sulfur center (81 aa).

4Fe-4S ferredoxin-type domains are found at residues 2-31 (SHSV…MVSW) and 39-68 (IASA…VRVY). Residues Cys-11, Cys-14, Cys-17, Cys-21, Cys-48, Cys-51, Cys-54, and Cys-58 each contribute to the [4Fe-4S] cluster site.

The eukaryotic PSI reaction center is composed of at least 11 subunits. The cofactor is [4Fe-4S] cluster.

It localises to the plastid. The protein resides in the chloroplast thylakoid membrane. It carries out the reaction reduced [plastocyanin] + hnu + oxidized [2Fe-2S]-[ferredoxin] = oxidized [plastocyanin] + reduced [2Fe-2S]-[ferredoxin]. Apoprotein for the two 4Fe-4S centers FA and FB of photosystem I (PSI); essential for photochemical activity. FB is the terminal electron acceptor of PSI, donating electrons to ferredoxin. The C-terminus interacts with PsaA/B/D and helps assemble the protein into the PSI complex. Required for binding of PsaD and PsaE to PSI. PSI is a plastocyanin/cytochrome c6-ferredoxin oxidoreductase, converting photonic excitation into a charge separation, which transfers an electron from the donor P700 chlorophyll pair to the spectroscopically characterized acceptors A0, A1, FX, FA and FB in turn. The sequence is that of Photosystem I iron-sulfur center from Rhodomonas salina (Cryptomonas salina).